A 125-amino-acid chain; its full sequence is S-adenosylmethionine decarboxylase proenzyme (125 aa).

S61 serves as the catalytic Schiff-base intermediate with substrate; via pyruvic acid. Residue S61 is modified to Pyruvic acid (Ser); by autocatalysis. H66 (proton acceptor; for processing activity) is an active-site residue. C81 (proton donor; for catalytic activity) is an active-site residue.

This sequence belongs to the prokaryotic AdoMetDC family. Type 1 subfamily. As to quaternary structure, heterotetramer of two alpha and two beta chains arranged as a dimer of alpha/beta heterodimers. Requires pyruvate as cofactor. Is synthesized initially as an inactive proenzyme. Formation of the active enzyme involves a self-maturation process in which the active site pyruvoyl group is generated from an internal serine residue via an autocatalytic post-translational modification. Two non-identical subunits are generated from the proenzyme in this reaction, and the pyruvate is formed at the N-terminus of the alpha chain, which is derived from the carboxyl end of the proenzyme. The post-translation cleavage follows an unusual pathway, termed non-hydrolytic serinolysis, in which the side chain hydroxyl group of the serine supplies its oxygen atom to form the C-terminus of the beta chain, while the remainder of the serine residue undergoes an oxidative deamination to produce ammonia and the pyruvoyl group blocking the N-terminus of the alpha chain.

It carries out the reaction S-adenosyl-L-methionine + H(+) = S-adenosyl 3-(methylsulfanyl)propylamine + CO2. It participates in amine and polyamine biosynthesis; S-adenosylmethioninamine biosynthesis; S-adenosylmethioninamine from S-adenosyl-L-methionine: step 1/1. Its function is as follows. Catalyzes the decarboxylation of S-adenosylmethionine to S-adenosylmethioninamine (dcAdoMet), the propylamine donor required for the synthesis of the polyamines spermine and spermidine from the diamine putrescine. The polypeptide is S-adenosylmethionine decarboxylase proenzyme (Prochlorococcus marinus (strain MIT 9313)).